An 807-amino-acid chain; its full sequence is Probable phosphoketolase (807 aa).

It belongs to the XFP family. Thiamine diphosphate serves as cofactor.

In Nitrosospira multiformis (strain ATCC 25196 / NCIMB 11849 / C 71), this protein is Probable phosphoketolase.